We begin with the raw amino-acid sequence, 288 residues long: Release factor glutamine methyltransferase (288 aa).

S-adenosyl-L-methionine-binding positions include 123 to 127 (GTGSG), Asp146, and Asn190. 190–193 (NPPY) lines the substrate pocket.

It belongs to the protein N5-glutamine methyltransferase family. PrmC subfamily.

The catalysed reaction is L-glutaminyl-[peptide chain release factor] + S-adenosyl-L-methionine = N(5)-methyl-L-glutaminyl-[peptide chain release factor] + S-adenosyl-L-homocysteine + H(+). Methylates the class 1 translation termination release factors RF1/PrfA and RF2/PrfB on the glutamine residue of the universally conserved GGQ motif. In Bacillus subtilis (strain 168), this protein is Release factor glutamine methyltransferase.